The primary structure comprises 122 residues: Large ribosomal subunit protein bL12 (122 aa).

This sequence belongs to the bacterial ribosomal protein bL12 family. As to quaternary structure, homodimer. Part of the ribosomal stalk of the 50S ribosomal subunit. Forms a multimeric L10(L12)X complex, where L10 forms an elongated spine to which 2 to 4 L12 dimers bind in a sequential fashion. Binds GTP-bound translation factors.

Its function is as follows. Forms part of the ribosomal stalk which helps the ribosome interact with GTP-bound translation factors. Is thus essential for accurate translation. This is Large ribosomal subunit protein bL12 from Xylella fastidiosa (strain M12).